The primary structure comprises 279 residues: uncharacterized protein (279 aa).

The interval 136–279 is disordered; it reads TSNATEASEK…FTSDSSDEED (144 aa). The segment covering 228–238 has biased composition (low complexity); sequence NNGNGAVYSDS.

This is an uncharacterized protein from Invertebrate iridescent virus 3 (IIV-3).